The chain runs to 451 residues: Adenylyltransferase and sulfurtransferase MOCS3 (451 aa).

T60 bears the Phosphothreonine mark. Residues G99, D120, 127 to 131 (SNFHR), K144, and 188 to 189 (DN) each bind ATP. C229 and C232 together coordinate Zn(2+). C246 serves as the catalytic Glycyl thioester intermediate; for adenylyltransferase activity. C304 and C307 together coordinate Zn(2+). The Rhodanese domain maps to 353 to 449 (QQQPHLLIDV…WTHKVDPSFP (97 aa)). The active-site Cysteine persulfide intermediate; for sulfurtransferase activity is C408.

The protein in the N-terminal section; belongs to the HesA/MoeB/ThiF family. UBA4 subfamily. Zn(2+) serves as cofactor.

The protein localises to the cytoplasm. The protein resides in the cytosol. It catalyses the reaction [molybdopterin-synthase sulfur-carrier protein]-C-terminal Gly-Gly + ATP + H(+) = [molybdopterin-synthase sulfur-carrier protein]-C-terminal Gly-Gly-AMP + diphosphate. The enzyme catalyses [molybdopterin-synthase sulfur-carrier protein]-C-terminal Gly-Gly-AMP + S-sulfanyl-L-cysteinyl-[cysteine desulfurase] + AH2 = [molybdopterin-synthase sulfur-carrier protein]-C-terminal-Gly-aminoethanethioate + L-cysteinyl-[cysteine desulfurase] + A + AMP + 2 H(+). It functions in the pathway tRNA modification; 5-methoxycarbonylmethyl-2-thiouridine-tRNA biosynthesis. It participates in cofactor biosynthesis; molybdopterin biosynthesis. Its function is as follows. Plays a central role in 2-thiolation of mcm(5)S(2)U at tRNA wobble positions of cytosolic tRNA(Lys), tRNA(Glu) and tRNA(Gln). Also essential during biosynthesis of the molybdenum cofactor. Acts by mediating the C-terminal thiocarboxylation of sulfur carriers URM1 and MOCS2A. Its N-terminus first activates URM1 and MOCS2A as acyl-adenylates (-COAMP), then the persulfide sulfur on the catalytic cysteine is transferred to URM1 and MOCS2A to form thiocarboxylation (-COSH) of their C-terminus. The reaction probably involves hydrogen sulfide that is generated from the persulfide intermediate and that acts as a nucleophile towards URM1 and MOCS2A. Subsequently, a transient disulfide bond is formed. Does not use thiosulfate as sulfur donor; NFS1 probably acting as a sulfur donor for thiocarboxylation reactions. The sequence is that of Adenylyltransferase and sulfurtransferase MOCS3 from Drosophila ananassae (Fruit fly).